A 921-amino-acid chain; its full sequence is Valine--tRNA ligase (921 aa).

The 'HIGH' region signature appears at 40-50; that stretch reads PNVTGSLHMGH. The 'KMSKS' region motif lies at 522–526; it reads KMSKS. Lys525 provides a ligand contact to ATP. Positions 849 to 921 form a coiled coil; it reads MADLIDKEAE…LQHKNRIESL (73 aa).

The protein belongs to the class-I aminoacyl-tRNA synthetase family. ValS type 1 subfamily. As to quaternary structure, monomer.

The protein resides in the cytoplasm. It catalyses the reaction tRNA(Val) + L-valine + ATP = L-valyl-tRNA(Val) + AMP + diphosphate. Functionally, catalyzes the attachment of valine to tRNA(Val). As ValRS can inadvertently accommodate and process structurally similar amino acids such as threonine, to avoid such errors, it has a 'posttransfer' editing activity that hydrolyzes mischarged Thr-tRNA(Val) in a tRNA-dependent manner. This is Valine--tRNA ligase from Legionella pneumophila (strain Paris).